The following is a 252-amino-acid chain: Probable transcriptional regulatory protein DSY2470 (252 aa).

The protein belongs to the TACO1 family.

It localises to the cytoplasm. The sequence is that of Probable transcriptional regulatory protein DSY2470 from Desulfitobacterium hafniense (strain Y51).